The chain runs to 127 residues: Large-conductance mechanosensitive channel (127 aa).

The next 3 helical transmembrane spans lie at 9-29 (EFAM…GVAF), 32-52 (IVTA…LGGV), and 75-95 (VIDF…INLL).

Belongs to the MscL family. As to quaternary structure, homopentamer.

Its subcellular location is the cell inner membrane. In terms of biological role, channel that opens in response to stretch forces in the membrane lipid bilayer. May participate in the regulation of osmotic pressure changes within the cell. This Legionella pneumophila (strain Lens) protein is Large-conductance mechanosensitive channel.